The primary structure comprises 306 residues: 4-diphosphocytidyl-2-C-methyl-D-erythritol kinase (306 aa).

Residue lysine 23 is part of the active site. 108–118 (PIAAGIGGGSA) is an ATP binding site. The active site involves aspartate 150.

The protein belongs to the GHMP kinase family. IspE subfamily.

The catalysed reaction is 4-CDP-2-C-methyl-D-erythritol + ATP = 4-CDP-2-C-methyl-D-erythritol 2-phosphate + ADP + H(+). It functions in the pathway isoprenoid biosynthesis; isopentenyl diphosphate biosynthesis via DXP pathway; isopentenyl diphosphate from 1-deoxy-D-xylulose 5-phosphate: step 3/6. Functionally, catalyzes the phosphorylation of the position 2 hydroxy group of 4-diphosphocytidyl-2C-methyl-D-erythritol. The polypeptide is 4-diphosphocytidyl-2-C-methyl-D-erythritol kinase (Rhodopseudomonas palustris (strain BisB18)).